Consider the following 369-residue polypeptide: Mitogen-activated protein kinase 4 (369 aa).

One can recognise a Protein kinase domain in the interval 32–319; sequence YVPIKPIGRG…VTEALEHPYM (288 aa). Residues 38–46 and lysine 61 each bind ATP; that span reads IGRGAYGIV. The active-site Proton acceptor is aspartate 158. Threonine 191 is subject to Phosphothreonine. The TXY motif lies at 191-193; that stretch reads TEY. Tyrosine 193 carries the post-translational modification Phosphotyrosine.

The protein belongs to the protein kinase superfamily. CMGC Ser/Thr protein kinase family. MAP kinase subfamily. In terms of processing, dually phosphorylated on Thr-191 and Tyr-193, which activates the enzyme. As to expression, expressed in leaves and panicles.

The catalysed reaction is L-seryl-[protein] + ATP = O-phospho-L-seryl-[protein] + ADP + H(+). It carries out the reaction L-threonyl-[protein] + ATP = O-phospho-L-threonyl-[protein] + ADP + H(+). Activated by threonine and tyrosine phosphorylation. The polypeptide is Mitogen-activated protein kinase 4 (MPK4) (Oryza sativa subsp. japonica (Rice)).